We begin with the raw amino-acid sequence, 173 residues long: Lipoprotein signal peptidase (173 aa).

Transmembrane regions (helical) follow at residues 7 to 27 (FFWFTALLSLLLDHLTKLWVV), 41 to 61 (LWPGVFHLTYVTNTGAAFSLF), 70 to 90 (WLSLGVSVGLMALAILGPNFN), and 95 to 115 (AGYGFLLGGAAGNGIDRFVAG). Active-site residues include Asp119 and Asp135. Residues 130 to 150 (IFNLADVFINIGIICLLIAAW) traverse the membrane as a helical segment.

It belongs to the peptidase A8 family.

It localises to the cell inner membrane. The catalysed reaction is Release of signal peptides from bacterial membrane prolipoproteins. Hydrolyzes -Xaa-Yaa-Zaa-|-(S,diacylglyceryl)Cys-, in which Xaa is hydrophobic (preferably Leu), and Yaa (Ala or Ser) and Zaa (Gly or Ala) have small, neutral side chains.. The protein operates within protein modification; lipoprotein biosynthesis (signal peptide cleavage). In terms of biological role, this protein specifically catalyzes the removal of signal peptides from prolipoproteins. In Cyanothece sp. (strain PCC 7425 / ATCC 29141), this protein is Lipoprotein signal peptidase.